The following is a 244-amino-acid chain: Small ribosomal subunit protein uS2 (244 aa).

This sequence belongs to the universal ribosomal protein uS2 family.

In Buchnera aphidicola subsp. Schizaphis graminum (strain Sg), this protein is Small ribosomal subunit protein uS2.